A 1692-amino-acid polypeptide reads, in one-letter code: Cullin-7 (1692 aa).

Residues 348-421 (RTAFASVNTY…HWHMLEILGF (74 aa)) form the CPH domain. Residues 791-970 (PIQIPFFDVF…HTRLFYMVRA (180 aa)) enclose the DOC domain. The span at 1319-1335 (VAHEDSGKEHKSKKEDA) shows a compositional bias: basic and acidic residues. A disordered region spans residues 1319-1374 (VAHEDSGKEHKSKKEDAAGETAAVAMADEEEEEGKKEEGEEEEGEGEEELEEEEER). Over residues 1357–1374 (GEEEEGEGEEELEEEEER) the composition is skewed to acidic residues. A Glycyl lysine isopeptide (Lys-Gly) (interchain with G-Cter in NEDD8) cross-link involves residue Lys1570.

It belongs to the cullin family. In terms of assembly, component of the 3M complex, composed of core components CUL7, CCDC8 and OBSL1. Component of the Cul7-RING(FBXW8) complex consisting of CUL7, RBX1, SKP1 and FBXW8. Within the Cul7-RING(FBXW8) complex interacts with FBXW8 and RBX1, but not with SKP1. Interacts with CUL1 (via the C-terminal domain); the interaction seems to be mediated by FBXW8; it is likely specific to FBXW8, but not other F-box proteins. Interacts (via the CPH domain) with p53/TP53; the interaction preferentially involves tetrameric and dimeric p53/TP53; this interaction recruits p53/TP53 for ubiquitination by neddylated CUL1-RBX1. The CUL7-CUL9 heterodimer seems to interact specifically with p53/TP53. Interacts with FBXW8; interaction is mutually exclusive of binding to CUL9 or p53/TP53. Interacts with CUL9; leading to inhibited CUL9 activity. Interacts with OBSL1. Interacts (as part of the 3M complex) with HDAC4 and HDAC5; it is negatively regulated by ANKRA2.

The protein resides in the cytoplasm. The protein localises to the cytoskeleton. It localises to the microtubule organizing center. Its subcellular location is the centrosome. It is found in the perinuclear region. The protein resides in the golgi apparatus. The protein operates within protein modification; protein ubiquitination. Functionally, core component of the 3M and Cul7-RING(FBXW8) complexes, which mediate the ubiquitination and subsequent proteasomal degradation of target proteins. Core component of the 3M complex, a complex required to regulate microtubule dynamics and genome integrity. It is unclear how the 3M complex regulates microtubules, it could act by controlling the level of a microtubule stabilizer. The Cul7-RING(FBXW8) complex alone lacks ubiquitination activity and does not promote polyubiquitination and proteasomal degradation of p53/TP53. However it mediates recruitment of p53/TP53 for ubiquitination by neddylated CUL1-RBX1. Interaction with CUL9 is required to inhibit CUL9 activity and ubiquitination of BIRC5. The Cul7-RING(FBXW8) complex also mediates ubiquitination and consequent degradation of target proteins such as GORASP1, IRS1 and MAP4K1/HPK1. Ubiquitination of GORASP1 regulates Golgi morphogenesis and dendrite patterning in brain. Mediates ubiquitination and degradation of IRS1 in a mTOR-dependent manner: the Cul7-RING(FBXW8) complex recognizes and binds IRS1 previously phosphorylated by S6 kinase (RPS6KB1 or RPS6KB2). The Cul7-RING(FBXW8) complex also mediates ubiquitination of MAP4K1/HPK1: recognizes and binds autophosphorylated MAP4K1/HPK1, leading to its degradation, thereby affecting cell proliferation and differentiation. Acts as a regulator in trophoblast cell epithelial-mesenchymal transition and placental development. While the Cul7-RING(FBXW8) and the 3M complexes are associated and involved in common processes, CUL7 and the Cul7-RING(FBXW8) complex may have additional functions. Probably plays a role in the degradation of proteins involved in endothelial proliferation and/or differentiation. In Rattus norvegicus (Rat), this protein is Cullin-7 (Cul7).